The following is a 354-amino-acid chain: Uroporphyrinogen decarboxylase (354 aa).

Residues 30–34, phenylalanine 49, aspartate 79, tyrosine 156, serine 211, and histidine 326 each bind substrate; that span reads RQAGR.

The protein belongs to the uroporphyrinogen decarboxylase family. In terms of assembly, homodimer.

The protein localises to the cytoplasm. It catalyses the reaction uroporphyrinogen III + 4 H(+) = coproporphyrinogen III + 4 CO2. Its pathway is porphyrin-containing compound metabolism; protoporphyrin-IX biosynthesis; coproporphyrinogen-III from 5-aminolevulinate: step 4/4. Catalyzes the decarboxylation of four acetate groups of uroporphyrinogen-III to yield coproporphyrinogen-III. The chain is Uroporphyrinogen decarboxylase from Salinibacter ruber (strain DSM 13855 / M31).